Reading from the N-terminus, the 876-residue chain is Valine--tRNA ligase (876 aa).

The short motif at 44-54 is the 'HIGH' region element; it reads PNVTGKLHLGH. Positions 520–524 match the 'KMSKS' region motif; the sequence is KMSKS. Residue Lys523 participates in ATP binding. Positions 806–876 form a coiled coil; it reads EGLIDMDKEI…VKLRINQLKA (71 aa).

Belongs to the class-I aminoacyl-tRNA synthetase family. ValS type 1 subfamily. As to quaternary structure, monomer.

Its subcellular location is the cytoplasm. It carries out the reaction tRNA(Val) + L-valine + ATP = L-valyl-tRNA(Val) + AMP + diphosphate. Its function is as follows. Catalyzes the attachment of valine to tRNA(Val). As ValRS can inadvertently accommodate and process structurally similar amino acids such as threonine, to avoid such errors, it has a 'posttransfer' editing activity that hydrolyzes mischarged Thr-tRNA(Val) in a tRNA-dependent manner. The polypeptide is Valine--tRNA ligase (Staphylococcus saprophyticus subsp. saprophyticus (strain ATCC 15305 / DSM 20229 / NCIMB 8711 / NCTC 7292 / S-41)).